The following is a 63-amino-acid chain: Large ribosomal subunit protein bL35 (63 aa).

It belongs to the bacterial ribosomal protein bL35 family.

In Campylobacter hominis (strain ATCC BAA-381 / DSM 21671 / CCUG 45161 / LMG 19568 / NCTC 13146 / CH001A), this protein is Large ribosomal subunit protein bL35.